The primary structure comprises 175 residues: Transcription factor E (175 aa).

In terms of domain architecture, HTH TFE/IIEalpha-type spans 3 to 88 (DNPLIQQVLF…TWKPSLEKLP (86 aa)).

This sequence belongs to the TFE family. In terms of assembly, monomer. Interaction with RNA polymerase subunits RpoF and RpoE is necessary for Tfe stimulatory transcription activity. Able to interact with Tbp and RNA polymerase in the absence of DNA promoter. Interacts both with the preinitiation and elongation complexes.

Functionally, transcription factor that plays a role in the activation of archaeal genes transcribed by RNA polymerase. Facilitates transcription initiation by enhancing TATA-box recognition by TATA-box-binding protein (Tbp), and transcription factor B (Tfb) and RNA polymerase recruitment. Not absolutely required for transcription in vitro, but particularly important in cases where Tbp or Tfb function is not optimal. It dynamically alters the nucleic acid-binding properties of RNA polymerases by stabilizing the initiation complex and destabilizing elongation complexes. Seems to translocate with the RNA polymerase following initiation and acts by binding to the non template strand of the transcription bubble in elongation complexes. This Methanococcus vannielii (strain ATCC 35089 / DSM 1224 / JCM 13029 / OCM 148 / SB) protein is Transcription factor E.